The chain runs to 317 residues: Actin-related protein 2/3 complex subunit 2 (317 aa).

It belongs to the ARPC2 family. In terms of assembly, component of the Arp2/3 complex composed of arp2, act2, arc1/p41-ARC, arc2/p34-ARC, arc3/p21-ARC, arc4/p20-ARC and arc5/p16-ARC.

The protein localises to the cytoplasm. It localises to the cytoskeleton. It is found in the actin patch. Functionally, functions as actin-binding component of the Arp2/3 complex which is involved in regulation of actin polymerization and together with an activating nucleation-promoting factor (NPF) mediates the formation of branched actin networks. Seems to contact the mother actin filament. This Schizosaccharomyces pombe (strain 972 / ATCC 24843) (Fission yeast) protein is Actin-related protein 2/3 complex subunit 2 (arc2).